Consider the following 125-residue polypeptide: Large ribosomal subunit protein bL20 (125 aa).

The protein belongs to the bacterial ribosomal protein bL20 family.

In terms of biological role, binds directly to 23S ribosomal RNA and is necessary for the in vitro assembly process of the 50S ribosomal subunit. It is not involved in the protein synthesizing functions of that subunit. The chain is Large ribosomal subunit protein bL20 from Zymomonas mobilis subsp. mobilis (strain ATCC 31821 / ZM4 / CP4).